The sequence spans 153 residues: Histone H2B.4 (153 aa).

Composition is skewed to basic and acidic residues over residues 1-28 and 36-53; these read MAPKAEKKPAAKKPAEEEPAAEKAEKAP and EKRLPAGKAEKGSGEGKK. Positions 1–61 are disordered; that stretch reads MAPKAEKKPA…KKAGRKKAKK (61 aa). 2 positions are modified to N6-acetyllysine: K7 and K37. K149 is covalently cross-linked (Glycyl lysine isopeptide (Lys-Gly) (interchain with G-Cter in ubiquitin)).

It belongs to the histone H2B family. In terms of assembly, the nucleosome is a histone octamer containing two molecules each of H2A, H2B, H3 and H4 assembled in one H3-H4 heterotetramer and two H2A-H2B heterodimers. The octamer wraps approximately 147 bp of DNA. In terms of processing, can be acetylated to form H2BK6ac and H2BK33ac. Post-translationally, monoubiquitinated by BRE1 to form H2BK143ub1 and deubiquitinated by UBP26. Required for heterochromatic histone H3 di- and trimethylation at H3K4me. May give a specific tag for epigenetic transcriptional activation.

It localises to the nucleus. The protein localises to the chromosome. In terms of biological role, core component of nucleosome. Nucleosomes wrap and compact DNA into chromatin, limiting DNA accessibility to the cellular machineries which require DNA as a template. Histones thereby play a central role in transcription regulation, DNA repair, DNA replication and chromosomal stability. DNA accessibility is regulated via a complex set of post-translational modifications of histones, also called histone code, and nucleosome remodeling. The chain is Histone H2B.4 (H2B.4) from Oryza sativa subsp. indica (Rice).